Consider the following 211-residue polypeptide: Metalloproteinase inhibitor 3 (211 aa).

The signal sequence occupies residues 1–23 (MTPWLGLVVLLGSWSLGDWGAEA). Cys-24 is a binding site for Zn(2+). 2 involved in metalloproteinase-binding regions span residues 24 to 27 (CTCS) and 88 to 89 (ES). 6 cysteine pairs are disulfide-bonded: Cys-24-Cys-91, Cys-26-Cys-118, Cys-36-Cys-143, Cys-145-Cys-192, Cys-150-Cys-155, and Cys-163-Cys-184. Residues 24-143 (CTCSPSHPQD…GLNYRYHLGC (120 aa)) enclose the NTR domain. The tract at residues 105–188 (TGRVYDGKMY…SKHYACIRQK (84 aa)) is mediates interaction with EFEMP1. A glycan (N-linked (GlcNAc...) asparagine) is linked at Asn-207.

This sequence belongs to the protease inhibitor I35 (TIMP) family. As to quaternary structure, interacts with EFEMP1. Interacts with KDR.

The protein resides in the secreted. Its subcellular location is the extracellular space. It localises to the extracellular matrix. Its function is as follows. Mediates a variety of processes including matrix regulation and turnover, inflammation, and angiogenesis, through reversible inhibition of zinc protease superfamily enzymes, primarily matrix metalloproteinases (MMPs). Regulates extracellular matrix (ECM) remodeling through inhibition of matrix metalloproteinases (MMP) including MMP-1, MMP-2, MMP-3, MMP-7, MMP-9, MMP-13, MMP-14 and MMP-15. Additionally, modulates the processing of amyloid precursor protein (APP) and apolipoprotein E receptor ApoER2 by inhibiting two alpha-secretases ADAM10 and ADAM17. Functions as a tumor suppressor and a potent inhibitor of angiogenesis. Exerts its anti-angiogenic effect by directly interacting with vascular endothelial growth factor (VEGF) receptor-2/KDR, preventing its binding to the VEGFA ligand. Selectively induces apoptosis in angiogenic endothelial cells through a caspase-independent cell death pathway. Mechanistically, inhibits matrix-induced focal adhesion kinase PTK2 tyrosine phosphorylation and association with paxillin/PXN and disrupts the incorporation of ITGB3, PTK2 and PXN into focal adhesion contacts on the matrix. The protein is Metalloproteinase inhibitor 3 (TIMP3) of Equus caballus (Horse).